Here is a 481-residue protein sequence, read N- to C-terminus: MAELQMLLEEEIPSGKRALIESYQNLTRVADYCENNYIQATDKRKALEETKAYTTQSLASVAYQINALANNVLQLLDIQASQLRRMESSINHISQTVDIHKEKVARREIGILTTNKNTSRTHKIIAPANMERPVRYIRKPIDYTVLDDVGHGVKWLKAKHGNNQPARTGTLSRTNPPTQKPPSPPVSGRGTLGRNTPYKTLEPVKPPTVPNDYMTSPARLGSQHSPGRTASLNQRPRTHSGSSGGSGSRENSGSSSIGIPIAVPTPSPPTAGPAAPGAAPGSQYGTMTRQISRHNSTTSSTSSGGYRRTPSVAAQFSAQPHVNGGPLYSQNSISVAPPPPPMPQLTPQIPLTGFVARVQENIADSPTPPPPPPPDDIPMFDDSPPPPPPPPVDYEDEEAAVVQYSDPYADGDPAWAPKNYIEKVVAIYDYTKDKDDELSFKEGAIIYVIKKNDDGWFEGVCNRVTGLFPGNYVESIMHYTD.

At Ala2 the chain carries N-acetylalanine. Residues 18–79 (ALIESYQNLT…NNVLQLLDIQ (62 aa)) are required for binding to WASF1. Positions 45–107 (KALEETKAYT…DIHKEKVARR (63 aa)) constitute a t-SNARE coiled-coil homology domain. Position 53 is a phosphotyrosine (Tyr53). Residues 158 to 285 (AKHGNNQPAR…PGAAPGSQYG (128 aa)) form a disordered region. Residues 161-175 (GNNQPARTGTLSRTN) show a composition bias toward polar residues. A phosphothreonine mark is found at Thr174 and Thr178. Phosphoserine is present on residues Ser183 and Ser187. Tyr213 carries the post-translational modification Phosphotyrosine. At Thr215 the chain carries Phosphothreonine. 3 positions are modified to phosphoserine: Ser216, Ser222, and Ser225. Residues 222–235 (SQHSPGRTASLNQR) show a composition bias toward polar residues. Low complexity-rich tracts occupy residues 248-258 (SRENSGSSSIG) and 272-282 (GPAAPGAAPGS). Residues Ser292 and Ser296 each carry the phosphoserine modification. 2 disordered regions span residues 318 to 348 (AQPH…LTPQ) and 361 to 392 (NIAD…PPPV). 2 stretches are compositionally biased toward pro residues: residues 366 to 376 (PTPPPPPPPDD) and 383 to 392 (SPPPPPPPPV). The SH3 domain occupies 419–478 (NYIEKVVAIYDYTKDKDDELSFKEGAIIYVIKKNDDGWFEGVCNRVTGLFPGNYVESIMH). Tyr428 is modified (phosphotyrosine). Ser439 carries the post-translational modification Phosphoserine. Phosphothreonine is present on Thr480.

The protein belongs to the ABI family. Interacts with ENAH, Abelson murine leukemia virus V-ABL, ABL1, STX1A, SNAP25, VAMP2, and through its N-terminus with WASF1. Part of a complex consisting of ABI1, STX1A and SNAP25. Part of a complex consisting of ABI1, EPS8 and SOS1. Interacts with EPS8, SOS1, SOS2, GRB2, SPTA1, and the first SH3 domain of NCK1. Component of the WAVE2 complex composed of ABI1, CYFIP1/SRA1, NCKAP1/NAP1 (NCKAP1l/HEM1 in hematopoietic cells) and WASF2/WAVE2. Interacts (via SH3 domain) with SHANK2 and SHANK3, but not SHANK1; the interaction is direct. Interacts with the heterodimer MYC:MAX; the interaction may enhance MYC:MAX transcriptional activity. Interacts with FNBP1L (via the SH3 domain), WASF2, and CDC42, but only in the presence of FNBP1L. Phosphorylated on tyrosine residues after serum stimulation or induction by v-Abl. Seems to be phosphorylated at Tyr-53 by ABL1, required for nuclear but not for synaptic localization. As to expression, widely expressed with highest levels in bone marrow, spleen, brain, testes, and embryonic brain. In adult brain prominently expressed in the neocortex, hippocampus and dentate gyrus.

The protein resides in the cytoplasm. Its subcellular location is the nucleus. It localises to the cell projection. The protein localises to the lamellipodium. It is found in the filopodium. The protein resides in the growth cone. Its subcellular location is the postsynaptic density. It localises to the cytoskeleton. Its function is as follows. May act in negative regulation of cell growth and transformation by interacting with nonreceptor tyrosine kinases ABL1 and/or ABL2. In vitro, at least isoform 2 and isoform 4 suppress the transforming activity of Abelson murine leukemia virus (v-Abl) after overexpression in fibroblasts. May play a role in regulation EGF-induced Erk pathway activation. Involved in cytoskeletal reorganization and EGFR signaling. Together with EPS8 participates in transduction of signals from Ras to Rac. In vitro, a trimeric complex of ABI1, EPS8 and SOS1 exhibits Rac specific guanine nucleotide exchange factor (GEF) activity and ABI1 seems to act as an adapter in the complex. Regulates ABL1/c-Abl-mediated phosphorylation of ENAH. Recruits WASF1 to lamellipodia and there seems to regulate WASF1 protein level. In brain, seems to regulate the dendritic outgrowth and branching as well as to determine the shape and number of synaptic contacts of developing neurons. This chain is Abl interactor 1, found in Mus musculus (Mouse).